A 1156-amino-acid polypeptide reads, in one-letter code: Pesticidal crystal protein Cry9Aa (1156 aa).

The propeptide at 1 to 23 (MNQNKHGIIGASNCGCASDDVAK) is removed in mature form.

It belongs to the delta endotoxin family.

Promotes colloidosmotic lysis by binding to the midgut epithelial cells of insects. This protein is toxic to Galleria mellonella. The sequence is that of Pesticidal crystal protein Cry9Aa (cry9Aa) from Bacillus thuringiensis subsp. galleriae.